The following is a 78-amino-acid chain: UPF0291 protein LBUL_1264 (78 aa).

This sequence belongs to the UPF0291 family.

Its subcellular location is the cytoplasm. The sequence is that of UPF0291 protein LBUL_1264 from Lactobacillus delbrueckii subsp. bulgaricus (strain ATCC BAA-365 / Lb-18).